We begin with the raw amino-acid sequence, 229 residues long: Enolase-phosphatase E1 (229 aa).

Belongs to the HAD-like hydrolase superfamily. MasA/MtnC family. In terms of assembly, monomer. It depends on Mg(2+) as a cofactor.

It carries out the reaction 5-methylsulfanyl-2,3-dioxopentyl phosphate + H2O = 1,2-dihydroxy-5-(methylsulfanyl)pent-1-en-3-one + phosphate. It functions in the pathway amino-acid biosynthesis; L-methionine biosynthesis via salvage pathway; L-methionine from S-methyl-5-thio-alpha-D-ribose 1-phosphate: step 3/6. It participates in amino-acid biosynthesis; L-methionine biosynthesis via salvage pathway; L-methionine from S-methyl-5-thio-alpha-D-ribose 1-phosphate: step 4/6. Its function is as follows. Bifunctional enzyme that catalyzes the enolization of 2,3-diketo-5-methylthiopentyl-1-phosphate (DK-MTP-1-P) into the intermediate 2-hydroxy-3-keto-5-methylthiopentenyl-1-phosphate (HK-MTPenyl-1-P), which is then dephosphorylated to form the acireductone 1,2-dihydroxy-3-keto-5-methylthiopentene (DHK-MTPene). In Yersinia pestis (strain Pestoides F), this protein is Enolase-phosphatase E1.